Here is a 252-residue protein sequence, read N- to C-terminus: Isoprenyl transferase (252 aa).

Residue Asp32 is part of the active site. A Mg(2+)-binding site is contributed by Asp32. Residues Gly33–Arg36, Trp37, Arg45, His49, and Ser77–Glu79 each bind substrate. Asn80 (proton acceptor) is an active-site residue. Residues Trp81, Arg83, Arg200, and Arg206 to Ser208 contribute to the substrate site. Glu219 lines the Mg(2+) pocket.

The protein belongs to the UPP synthase family. As to quaternary structure, homodimer. Mg(2+) is required as a cofactor.

Its function is as follows. Catalyzes the condensation of isopentenyl diphosphate (IPP) with allylic pyrophosphates generating different type of terpenoids. This Listeria monocytogenes serotype 4b (strain F2365) protein is Isoprenyl transferase.